The sequence spans 137 residues: NADH-quinone oxidoreductase subunit A (137 aa).

A run of 3 helical transmembrane segments spans residues 12–32 (WGFAIFLLGVVGLCAFMLGVS), 66–86 (FYLVAMLFVIFDIEALFLFAW), and 96–116 (TGFVEALVFIAILLAGLVYLF).

It belongs to the complex I subunit 3 family. NDH-1 is composed of 13 different subunits. Subunits NuoA, H, J, K, L, M, N constitute the membrane sector of the complex.

The protein localises to the cell inner membrane. It carries out the reaction a quinone + NADH + 5 H(+)(in) = a quinol + NAD(+) + 4 H(+)(out). In terms of biological role, NDH-1 shuttles electrons from NADH, via FMN and iron-sulfur (Fe-S) centers, to quinones in the respiratory chain. The immediate electron acceptor for the enzyme in this species is believed to be ubiquinone. Couples the redox reaction to proton translocation (for every two electrons transferred, four hydrogen ions are translocated across the cytoplasmic membrane), and thus conserves the redox energy in a proton gradient. In Pseudomonas fluorescens (strain Pf0-1), this protein is NADH-quinone oxidoreductase subunit A.